We begin with the raw amino-acid sequence, 527 residues long: Serine/threonine-protein kinase NLK (527 aa).

Sufficient for interaction with DAPK3 stretches follow at residues 1–125 (MSLC…KAHH) and 124–416 (HHHQ…SKRI). Required for interaction with TAB2 stretches follow at residues 1–304 (MSLC…VVTQ) and 434–527 (YHTC…LVWE). 2 disordered regions span residues 22–72 (AAAA…SSAA) and 90–140 (QQPY…DIEP). Basic residues predominate over residues 26–54 (GHHHHHHHHLPHLPPPHLHHHHHPQHHLH). The segment covering 103–119 (PGPAAAAPAQVQAAAAA) has biased composition (low complexity). Residues 122–131 (KAHHHQHSHH) are compositionally biased toward basic residues. Residues 138–427 (IEPDRPIGYG…AKDALAHPYL (290 aa)) form the Protein kinase domain. Residues 144–152 (IGYGAFGVV) and lysine 167 each bind ATP. Aspartate 264 serves as the catalytic Proton acceptor. A Phosphothreonine; by autocatalysis modification is found at threonine 298. The TQE motif lies at 298-300 (TQE). The required for homodimerization and kinase activation and localization to the nucleus stretch occupies residues 428 to 527 (DEGRLRYHTC…EMPPSPLVWE (100 aa)). Serine 522 carries the phosphoserine modification.

It belongs to the protein kinase superfamily. CMGC Ser/Thr protein kinase family. MAP kinase subfamily. As to quaternary structure, homodimer. Homodimerization is required for intermolecular autophosphorylation, kinase activation and nuclear localization. May interact with components of cullin-RING-based SCF (SKP1-CUL1-F-box protein) E3 ubiquitin-protein ligase complexes. Interacts with LEF1, MEF2A, MYBL1 and MYBL2. Interacts with the upstream activating kinases HIPK2 and MAP3K7/TAK1. Interaction with MAP3K7/TAK1 seems to be indirect, and may be mediated by other proteins such as STAT3, TAB1 and TAB2. Interacts with and phosphorylates a number of transcription factors including FOXO1, FOXO3, FOXO4, MYB, NOTCH1 and TCF7L2/TCF4. Interacts with DAPK3/ZIPK, and this interaction may disrupt interaction with transcription factors such as TCF7L2/TCF4. Interacts with RNF138/NARF. Interacts with ATF5; the interaction stabilizes ATF5 at the protein level in a kinase-independent manner. The cofactor is Mg(2+). Post-translationally, phosphorylated on Thr-298. Intermolecular autophosphorylation on Thr-298 activates the enzyme.

The protein resides in the nucleus. The protein localises to the cytoplasm. The catalysed reaction is L-seryl-[protein] + ATP = O-phospho-L-seryl-[protein] + ADP + H(+). The enzyme catalyses L-threonyl-[protein] + ATP = O-phospho-L-threonyl-[protein] + ADP + H(+). With respect to regulation, activated by dimerization and subsequent intermolecular autophosphorylation on Thr-298. Activated by the non-canonical Wnt signaling pathway, in which WNT5A treatment leads to activation of MAP3K7/TAK1 and HIPK2, which subsequently phosphorylates and activates this protein. Other cytokines such as IL6 may also activate this regulatory circuit. Serine/threonine-protein kinase that regulates a number of transcription factors with key roles in cell fate determination. Positive effector of the non-canonical Wnt signaling pathway, acting downstream of WNT5A, MAP3K7/TAK1 and HIPK2. Negative regulator of the canonical Wnt/beta-catenin signaling pathway. Binds to and phosphorylates TCF7L2/TCF4 and LEF1, promoting the dissociation of the TCF7L2/LEF1/beta-catenin complex from DNA, as well as the ubiquitination and subsequent proteolysis of LEF1. Together these effects inhibit the transcriptional activation of canonical Wnt/beta-catenin target genes. Negative regulator of the Notch signaling pathway. Binds to and phosphorylates NOTCH1, thereby preventing the formation of a transcriptionally active ternary complex of NOTCH1, RBPJ/RBPSUH and MAML1. Negative regulator of the MYB family of transcription factors. Phosphorylation of MYB leads to its subsequent proteolysis while phosphorylation of MYBL1 and MYBL2 inhibits their interaction with the coactivator CREBBP. Other transcription factors may also be inhibited by direct phosphorylation of CREBBP itself. Acts downstream of IL6 and MAP3K7/TAK1 to phosphorylate STAT3, which is in turn required for activation of NLK by MAP3K7/TAK1. Upon IL1B stimulus, cooperates with ATF5 to activate the transactivation activity of C/EBP subfamily members. Phosphorylates ATF5 but also stabilizes ATF5 protein levels in a kinase-independent manner. Acts as an inhibitor of the mTORC1 complex in response to osmotic stress by mediating phosphorylation of RPTOR, thereby preventing recruitment of the mTORC1 complex to lysosomes. In Homo sapiens (Human), this protein is Serine/threonine-protein kinase NLK (NLK).